Reading from the N-terminus, the 154-residue chain is D-aminoacyl-tRNA deacylase (154 aa).

Residues 138–139 carry the Gly-cisPro motif, important for rejection of L-amino acids motif; that stretch reads GP.

It belongs to the DTD family. Homodimer.

The protein localises to the cytoplasm. It catalyses the reaction glycyl-tRNA(Ala) + H2O = tRNA(Ala) + glycine + H(+). It carries out the reaction a D-aminoacyl-tRNA + H2O = a tRNA + a D-alpha-amino acid + H(+). An aminoacyl-tRNA editing enzyme that deacylates mischarged D-aminoacyl-tRNAs. Also deacylates mischarged glycyl-tRNA(Ala), protecting cells against glycine mischarging by AlaRS. Acts via tRNA-based rather than protein-based catalysis; rejects L-amino acids rather than detecting D-amino acids in the active site. By recycling D-aminoacyl-tRNA to D-amino acids and free tRNA molecules, this enzyme counteracts the toxicity associated with the formation of D-aminoacyl-tRNA entities in vivo and helps enforce protein L-homochirality. This chain is D-aminoacyl-tRNA deacylase, found in Halorhodospira halophila (strain DSM 244 / SL1) (Ectothiorhodospira halophila (strain DSM 244 / SL1)).